The primary structure comprises 379 residues: Chaperone protein DnaJ (379 aa).

The region spanning 5-70 (DYYEVLGLSK…EKKAMYDQYG (66 aa)) is the J domain. The CR-type zinc-finger motif lies at 136 to 214 (GCKKDIRIHT…CHGDGRVHKA (79 aa)). The Zn(2+) site is built by C149, C152, C166, C169, C188, C191, C202, and C205. 4 CXXCXGXG motif repeats span residues 149-156 (CDTCHGTG), 166-173 (CSHCHGSG), 188-195 (CPSCHGTG), and 202-209 (CRSCHGDG).

This sequence belongs to the DnaJ family. Homodimer. Zn(2+) serves as cofactor.

It is found in the cytoplasm. Its function is as follows. Participates actively in the response to hyperosmotic and heat shock by preventing the aggregation of stress-denatured proteins and by disaggregating proteins, also in an autonomous, DnaK-independent fashion. Unfolded proteins bind initially to DnaJ; upon interaction with the DnaJ-bound protein, DnaK hydrolyzes its bound ATP, resulting in the formation of a stable complex. GrpE releases ADP from DnaK; ATP binding to DnaK triggers the release of the substrate protein, thus completing the reaction cycle. Several rounds of ATP-dependent interactions between DnaJ, DnaK and GrpE are required for fully efficient folding. Also involved, together with DnaK and GrpE, in the DNA replication of plasmids through activation of initiation proteins. This Mannheimia haemolytica (Pasteurella haemolytica) protein is Chaperone protein DnaJ.